We begin with the raw amino-acid sequence, 337 residues long: Nicotinate-nucleotide--dimethylbenzimidazole phosphoribosyltransferase (337 aa).

Residue E305 is the Proton acceptor of the active site.

This sequence belongs to the CobT family.

It catalyses the reaction 5,6-dimethylbenzimidazole + nicotinate beta-D-ribonucleotide = alpha-ribazole 5'-phosphate + nicotinate + H(+). The protein operates within nucleoside biosynthesis; alpha-ribazole biosynthesis; alpha-ribazole from 5,6-dimethylbenzimidazole: step 1/2. In terms of biological role, catalyzes the synthesis of alpha-ribazole-5'-phosphate from nicotinate mononucleotide (NAMN) and 5,6-dimethylbenzimidazole (DMB). The polypeptide is Nicotinate-nucleotide--dimethylbenzimidazole phosphoribosyltransferase (Jannaschia sp. (strain CCS1)).